We begin with the raw amino-acid sequence, 77 residues long: uncharacterized protein (77 aa).

Residues 1–15 show a composition bias toward polar residues; it reads MNRTSESVEPQQNEK. Disordered stretches follow at residues 1–20 and 31–52; these read MNRT…AVHW and TYSN…QRTF. Residues 33–44 are compositionally biased toward acidic residues; that stretch reads SNEDDEDNEEGD.

This is an uncharacterized protein from Schizosaccharomyces pombe (strain 972 / ATCC 24843) (Fission yeast).